Consider the following 368-residue polypeptide: 2-deoxy-scyllo-inosose synthase (368 aa).

NAD(+)-binding positions include Asp42, Glu72 to Lys75, Gly104 to Asn108, Thr128 to Thr129, Ser139 to Lys141, Lys150 to Asn151, and Gln176. The active site involves Lys141. Co(2+) is bound at residue Glu183. Glu243 is a catalytic residue. Positions 246 and 262 each coordinate Co(2+).

The protein belongs to the sugar phosphate cyclases superfamily. DOI synthase family. Was isolated as a heterodimeric enzyme comprising of BtrC and a smaller polypeptide further identified as PdxT by sequence homology. Homodimer in solution. It depends on NAD(+) as a cofactor. Requires Co(2+) as cofactor.

The catalysed reaction is D-glucose 6-phosphate = 2-deoxy-L-scyllo-inosose + phosphate. Its pathway is metabolic intermediate biosynthesis; 2-deoxystreptamine biosynthesis; 2-deoxystreptamine from D-glucose 6-phosphate: step 1/4. The protein operates within antibiotic biosynthesis; butirosin biosynthesis. Strongly inhibited by EDTA, zinc and Cu(2+). Catalyzes the intramolecular carbocycle formation from D-glucose-6-phosphate to 2-deoxy-scyllo-inosose (DOI). This Niallia circulans (Bacillus circulans) protein is 2-deoxy-scyllo-inosose synthase (btrC).